The chain runs to 861 residues: MDEQYNPREVEQTARTFWETNETFKVKEEPGKPKYYCLSMFPYPSGKLHMGHVRNYTIGDVISRYQRMQGKNVMQPMGWDAFGLPAENAAIANKSAPAKWTRSNIDYMKNQLKQLGFGYDWSRELATCDPEYYRWEQWFFARLYEKGLVYKKMSTVNWDPVDQTVLANEQVVDGRGWRSGALVEQKKIPQWFIRITDYAEELLNDLEDMEGWPEQVKTMQRNWIGKSVGTELTFPLKEQEGGLTVYTTRPDTLMGVSYMAVAAEHPLAKAAAERHRDVAEFVDQCRNSKVAEAELATMEKKGIDTGFKAIHPLTQEEIPVWVANFVLMDYGTGALMAVPGHDERDHEFAVKYKLPIKQVIAPNDSRDIDIQEQAFTEKGVLVSSGKYSGLTSEEAFEEIADYLEAQGIGKRTVNYRLRDWGVSRQRYWGAPIPMMTLEDGTEMPVPDDQLPVRLPEDVEMDGVQSPIKADPEWCKTEYNGQPATLETDTFDTFMESSWYYARFCSPNYDKGMLDPAAANYWLPVDQYIGGIEHAILHLLYARFFHKLLRDVGLVNSSEPFKRLLTQGMVLAETYYRNEANGGKTWYNPADVTVERDGKGQVVRAVLKSDGEPVEIGGVTKMSKSKNNGIDPQAIIDQHGADTVRLFMMFAAPPEQSLEWSDSGVEGAHRFLKRLWRMVNEHTAGGDAPAVDPANLNGAQKDLRRKTHETIAKVSDDISRRLTFNTAIAAVMELLNEVGRLSDDEPQSRAVRQEALDTAVLVLSPIVPHICHNLWQALGHSDAVVDASWPVADESAMVRSEIEVVLQVNGKVRAKENVPADIGKADLEKLALENENVMRFTDGKTVRKVIVVPGKLVNVVAN.

Residues 42-52 (PYPSGKLHMGH) carry the 'HIGH' region motif. The 'KMSKS' region signature appears at 620–624 (KMSKS). Position 623 (Lys623) interacts with ATP.

This sequence belongs to the class-I aminoacyl-tRNA synthetase family.

It is found in the cytoplasm. It carries out the reaction tRNA(Leu) + L-leucine + ATP = L-leucyl-tRNA(Leu) + AMP + diphosphate. The protein is Leucine--tRNA ligase of Marinobacter nauticus (strain ATCC 700491 / DSM 11845 / VT8) (Marinobacter aquaeolei).